The primary structure comprises 262 residues: 3-methyl-2-oxobutanoate hydroxymethyltransferase (262 aa).

Mg(2+) contacts are provided by Asp42 and Asp81. 3-methyl-2-oxobutanoate contacts are provided by residues 42 to 43 (DS), Asp81, and Lys110. Residue Glu112 coordinates Mg(2+). Catalysis depends on Glu180, which acts as the Proton acceptor.

The protein belongs to the PanB family. In terms of assembly, homodecamer; pentamer of dimers. Mg(2+) serves as cofactor.

It localises to the cytoplasm. It carries out the reaction 3-methyl-2-oxobutanoate + (6R)-5,10-methylene-5,6,7,8-tetrahydrofolate + H2O = 2-dehydropantoate + (6S)-5,6,7,8-tetrahydrofolate. It functions in the pathway cofactor biosynthesis; (R)-pantothenate biosynthesis; (R)-pantoate from 3-methyl-2-oxobutanoate: step 1/2. In terms of biological role, catalyzes the reversible reaction in which hydroxymethyl group from 5,10-methylenetetrahydrofolate is transferred onto alpha-ketoisovalerate to form ketopantoate. The protein is 3-methyl-2-oxobutanoate hydroxymethyltransferase of Legionella pneumophila (strain Corby).